The following is a 341-amino-acid chain: Ferrochelatase (341 aa).

2 residues coordinate Fe cation: His210 and Glu291.

Belongs to the ferrochelatase family.

It localises to the cytoplasm. It catalyses the reaction heme b + 2 H(+) = protoporphyrin IX + Fe(2+). It participates in porphyrin-containing compound metabolism; protoheme biosynthesis; protoheme from protoporphyrin-IX: step 1/1. Functionally, catalyzes the ferrous insertion into protoporphyrin IX. This chain is Ferrochelatase, found in Alcanivorax borkumensis (strain ATCC 700651 / DSM 11573 / NCIMB 13689 / SK2).